Consider the following 436-residue polypeptide: Hydrogenobyrinate a,c-diamide synthase (436 aa).

The region spanning histidine 244 to lysine 435 is the GATase cobBQ-type domain. Residue cysteine 327 is the Nucleophile of the active site.

The protein belongs to the CobB/CbiA family. The cofactor is Mg(2+).

It carries out the reaction hydrogenobyrinate + 2 L-glutamine + 2 ATP + 2 H2O = hydrogenobyrinate a,c-diamide + 2 L-glutamate + 2 ADP + 2 phosphate + 2 H(+). It functions in the pathway cofactor biosynthesis; adenosylcobalamin biosynthesis; cob(II)yrinate a,c-diamide from precorrin-2 (aerobic route): step 9/10. Functionally, catalyzes the ATP-dependent amidation of the two carboxylate groups at positions a and c of hydrogenobyrinate, using either L-glutamine or ammonia as the nitrogen source. The polypeptide is Hydrogenobyrinate a,c-diamide synthase (Brucella anthropi (strain ATCC 49188 / DSM 6882 / CCUG 24695 / JCM 21032 / LMG 3331 / NBRC 15819 / NCTC 12168 / Alc 37) (Ochrobactrum anthropi)).